We begin with the raw amino-acid sequence, 172 residues long: Adenylate kinase isoenzyme 6 (172 aa).

The ATP site is built by glycine 13, glycine 15, lysine 16, threonine 17, and threonine 18. The segment at 33–56 is NMPbind; that stretch reads NVGDLAREGQLYDGYDEEYGCPIL. The segment at 108–118 is LID; it reads TRGYNEKKLQD. Arginine 109 contributes to the ATP binding site.

This sequence belongs to the adenylate kinase family. AK6 subfamily. As to quaternary structure, monomer and homodimer. Interacts with small ribosomal subunit protein uS11. Not a structural component of 43S pre-ribosomes, but transiently interacts with them by binding to uS11. Interacts with COIL (via C-terminus).

It localises to the cytoplasm. Its subcellular location is the nucleus. It is found in the nucleoplasm. The protein localises to the cajal body. The catalysed reaction is AMP + ATP = 2 ADP. It catalyses the reaction ATP + H2O = ADP + phosphate + H(+). Functionally, broad-specificity nucleoside monophosphate (NMP) kinase that catalyzes the reversible transfer of the terminal phosphate group between nucleoside triphosphates and monophosphates. Also has ATPase activity. Involved in the late cytoplasmic maturation steps of the 40S ribosomal particles, specifically 18S rRNA maturation. While NMP activity is not required for ribosome maturation, ATPase activity is. Associates transiently with small ribosomal subunit protein uS11. ATP hydrolysis breaks the interaction with uS11. May temporarily remove uS11 from the ribosome to enable a conformational change of the ribosomal RNA that is needed for the final maturation step of the small ribosomal subunit. Its NMP activity may have a role in nuclear energy homeostasis. May be involved in regulation of Cajal body (CB) formation. The chain is Adenylate kinase isoenzyme 6 from Mus musculus (Mouse).